A 116-amino-acid chain; its full sequence is Dynein light chain Tctex-type 3 (116 aa).

The residue at position 4 (Tyr4) is a 3'-nitrotyrosine.

This sequence belongs to the dynein light chain Tctex-type family. As to quaternary structure, homodimer. The cytoplasmic dynein 1 complex consists of two catalytic heavy chains (HCs) and a number of non-catalytic subunits presented by intermediate chains (ICs), light intermediate chains (LICs) and light chains (LCs); the composition seems to vary in respect to the IC, LIC and LC composition. The heavy chain homodimer serves as a scaffold for the probable homodimeric assembly of the respective non-catalytic subunits. The ICs and LICs bind directly to the HC dimer and the LCs assemble on the IC dimer. DYNLT1 and DYNLT3 compete for association with dynein IC (DYNC1I1 or DYNC1I2). Self-associates. Interacts with DYNC1I1 and DYNC1I2. Interacts with BUB3. Interacts with SATB1 in nucleus to form complex with matrix attachment regions (MARs) of DNA.

The protein resides in the nucleus. It localises to the cytoplasm. The protein localises to the cytoskeleton. It is found in the chromosome. Its subcellular location is the centromere. The protein resides in the kinetochore. In terms of biological role, acts as one of several non-catalytic accessory components of the cytoplasmic dynein 1 complex that are thought to be involved in linking dynein to cargos and to adapter proteins that regulate dynein function. Cytoplasmic dynein 1 acts as a motor for the intracellular retrograde motility of vesicles and organelles along microtubules. Probably binds BUB3 as part of transport cargo. Required for the efficient progression through mitosis. The protein is Dynein light chain Tctex-type 3 (DYNLT3) of Homo sapiens (Human).